Consider the following 128-residue polypeptide: Prokineticin-2 (128 aa).

Residues Met1–Ala26 form the signal peptide. Intrachain disulfides connect Cys33–Cys45, Cys39–Cys57, Cys44–Cys106, Cys67–Cys114, and Cys108–Cys124.

It belongs to the AVIT (prokineticin) family. Expressed in the SCN and among a few other discrete brain areas, including the islands of Calleja, media l preoptic area of the hypothalamus and the shell of the nucleus accumbens. Highly expressed in testis. In the SCN, expression subjected to high amplitude of circadian oscillation.

Its subcellular location is the secreted. Functionally, may function as an output molecule from the suprachiasmatic nucleus (SCN) that transmits behavioral circadian rhythm. May also function locally within the SCN to synchronize output. Potently contracts gastrointestinal (GI) smooth muscle. In Mus musculus (Mouse), this protein is Prokineticin-2 (Prok2).